Consider the following 91-residue polypeptide: Defensin-like protein 269 (91 aa).

The first 25 residues, 1 to 25 (MAVSKTTMLIVLVAIILSCVSISNA), serve as a signal peptide directing secretion. 4 cysteine pairs are disulfide-bonded: Cys-41/Cys-82, Cys-53/Cys-72, Cys-59/Cys-77, and Cys-63/Cys-79.

The protein belongs to the DEFL family.

It is found in the secreted. The sequence is that of Defensin-like protein 269 from Arabidopsis thaliana (Mouse-ear cress).